We begin with the raw amino-acid sequence, 283 residues long: Polyamine aminopropyltransferase (283 aa).

Positions 5–238 (TTWIDEYHKG…GIWSWTFASS (234 aa)) constitute a PABS domain. Position 32 (Gln-32) interacts with S-methyl-5'-thioadenosine. Positions 63 and 87 each coordinate spermidine. S-methyl-5'-thioadenosine is bound by residues Glu-107 and 139-140 (DG). The Proton acceptor role is filled by Asp-158. Position 158 to 161 (158 to 161 (DSSD)) interacts with spermidine.

Belongs to the spermidine/spermine synthase family. Homodimer or homotetramer.

The protein localises to the cytoplasm. It carries out the reaction S-adenosyl 3-(methylsulfanyl)propylamine + putrescine = S-methyl-5'-thioadenosine + spermidine + H(+). Its pathway is amine and polyamine biosynthesis; spermidine biosynthesis; spermidine from putrescine: step 1/1. In terms of biological role, catalyzes the irreversible transfer of a propylamine group from the amino donor S-adenosylmethioninamine (decarboxy-AdoMet) to putrescine (1,4-diaminobutane) to yield spermidine. The protein is Polyamine aminopropyltransferase of Prochlorococcus marinus (strain MIT 9215).